Consider the following 162-residue polypeptide: RxLR effector protein PITG_06094 (162 aa).

An N-terminal signal peptide occupies residues 1-20 (MRLSFILAATLTGLLACATA). The RxLR-dEER signature appears at 51–91 (RFLRAYNDAEDDSEDPKNVKNTVDAKPADESEDSELSEEER). The interval 56–88 (YNDAEDDSEDPKNVKNTVDAKPADESEDSELSE) is disordered.

It belongs to the RxLR effector family.

It is found in the secreted. Its subcellular location is the host cytoplasm. It localises to the host nucleus. The protein localises to the host nucleolus. Functionally, effector that enhances P.infestans colonization of Nicotiana benthamiana leaves. The polypeptide is RxLR effector protein PITG_06094 (Phytophthora infestans (strain T30-4) (Potato late blight agent)).